A 256-amino-acid polypeptide reads, in one-letter code: 6-carboxyhexanoate--CoA ligase (256 aa).

Belongs to the BioW family. In terms of assembly, homodimer. Requires Mg(2+) as cofactor.

It catalyses the reaction heptanedioate + ATP + CoA = 6-carboxyhexanoyl-CoA + AMP + diphosphate. The protein operates within metabolic intermediate metabolism; pimeloyl-CoA biosynthesis; pimeloyl-CoA from pimelate: step 1/1. Its function is as follows. Catalyzes the transformation of pimelate into pimeloyl-CoA with concomitant hydrolysis of ATP to AMP. This Methanobrevibacter ruminantium (strain ATCC 35063 / DSM 1093 / JCM 13430 / OCM 146 / M1) (Methanobacterium ruminantium) protein is 6-carboxyhexanoate--CoA ligase.